The sequence spans 161 residues: Kininogen-2 (161 aa).

A signal peptide spans 1–23 (MRLWFCLSFFVVLCLEHFPGTLA). Cysteines 150 and 156 form a disulfide. Residue Val160 is modified to Valine amide.

The protein belongs to the bradykinin-related peptide family. Expressed by the skin glands.

The protein resides in the secreted. Functionally, inhibits ACE with a Ki of 1.6 uM, and targets B2 bradykinin receptor (BDKRB2). Provokes contraction of smooth muscle preparation (ileum). In vivo, induces an early hyperalgesic effects in living rats after intraplantar injection. In terms of biological role, inhibits the bradykinin-induced in vitro relaxation of rat arterial smooth muscle and constriction of intestinal smooth muscle. May target bradykinin receptors (BDKRB). The chain is Kininogen-2 from Bombina orientalis (Oriental fire-bellied toad).